A 134-amino-acid chain; its full sequence is kinetoplast-associated protein 3 (134 aa).

Positions 1–10 are excised as a propeptide; sequence MLRRSPTLLR. Positions 106-124 are enriched in low complexity; it reads PKAPKAAKSASSKVKTAAK. The disordered stretch occupies residues 106–134; the sequence is PKAPKAAKSASSKVKTAAKTAKKTTAARK. Basic residues predominate over residues 125–134; sequence TAKKTTAARK.

The protein belongs to the KAP family. Associates with the kinetoplast DNA network.

It localises to the mitochondrion matrix. The protein resides in the kinetoplast. Histone H1-like DNA-binding protein involved in the organization and segregation of kinetoplast DNA (kDNA). The mitochondrial DNA of kinetoplastid protozoa consists of about 5,000 minicircles and 20 to 30 maxicircles. These circular DNAs are held together by catenation into a highly organized compact disk structure referred to as a kinetoplast DNA (kDNA) network. Binds preferentially to a specific fragment of minicircle DNA and is able to compact kDNA networks through DNA charge neutralization and condensation. This is kinetoplast-associated protein 3 (KAP3) from Crithidia fasciculata.